Reading from the N-terminus, the 353-residue chain is Protein pelota homolog (353 aa).

The protein belongs to the eukaryotic release factor 1 family. Pelota subfamily. As to quaternary structure, monomer. A divalent metal cation is required as a cofactor.

It is found in the cytoplasm. Its function is as follows. May function in recognizing stalled ribosomes, interact with stem-loop structures in stalled mRNA molecules, and effect endonucleolytic cleavage of the mRNA. May play a role in the release non-functional ribosomes and degradation of damaged mRNAs. Has endoribonuclease activity. The chain is Protein pelota homolog from Methanopyrus kandleri (strain AV19 / DSM 6324 / JCM 9639 / NBRC 100938).